Reading from the N-terminus, the 387-residue chain is Arginine biosynthesis bifunctional protein ArgJ 2 (387 aa).

Residues Thr-147, Lys-169, Thr-180, Glu-259, Asn-382, and Thr-387 each coordinate substrate. The active-site Nucleophile is the Thr-180.

This sequence belongs to the ArgJ family. Heterotetramer of two alpha and two beta chains.

It localises to the cytoplasm. It carries out the reaction N(2)-acetyl-L-ornithine + L-glutamate = N-acetyl-L-glutamate + L-ornithine. The enzyme catalyses L-glutamate + acetyl-CoA = N-acetyl-L-glutamate + CoA + H(+). It functions in the pathway amino-acid biosynthesis; L-arginine biosynthesis; L-ornithine and N-acetyl-L-glutamate from L-glutamate and N(2)-acetyl-L-ornithine (cyclic): step 1/1. It participates in amino-acid biosynthesis; L-arginine biosynthesis; N(2)-acetyl-L-ornithine from L-glutamate: step 1/4. In terms of biological role, catalyzes two activities which are involved in the cyclic version of arginine biosynthesis: the synthesis of N-acetylglutamate from glutamate and acetyl-CoA as the acetyl donor, and of ornithine by transacetylation between N(2)-acetylornithine and glutamate. The polypeptide is Arginine biosynthesis bifunctional protein ArgJ 2 (Nostoc sp. (strain PCC 7120 / SAG 25.82 / UTEX 2576)).